The sequence spans 395 residues: Cuticlin-5 (395 aa).

An N-terminal signal peptide occupies residues 1–18 (MNFILAVFAIILLQAVRG). Residues 19 to 358 (EIDNAIVGDP…ELCMTAIGTT (340 aa)) are Extracellular-facing. Positions 46–291 (SCVGNFIIKV…DYCDVPSCPD (246 aa)) constitute a ZP domain. Asn-90 and Asn-307 each carry an N-linked (GlcNAc...) asparagine glycan. A helical membrane pass occupies residues 359–379 (LLVFLNAFLFIISLVSIVHVC). Residues 380–395 (CFRTSPKLEKTKSTML) lie on the Cytoplasmic side of the membrane.

Its subcellular location is the cell membrane. Functionally, plays a role in alae formation in L1 and dauer stage larvae. The protein is Cuticlin-5 of Caenorhabditis elegans.